The sequence spans 76 residues: U1-cyrtautoxin-As1b (76 aa).

4 disulfides stabilise this stretch: cysteine 23/cysteine 37, cysteine 30/cysteine 51, cysteine 36/cysteine 66, and cysteine 69/cysteine 76.

It belongs to the neurotoxin 21 family. Expressed by the venom gland.

The protein localises to the secreted. In terms of biological role, neurotoxin with probable ion channel impairing activity. Is both paralytic and lethal, when injected into lepidopteran larvae. This is U1-cyrtautoxin-As1b from Apomastus schlingeri (Trap-door spider).